The primary structure comprises 513 residues: 2,3-bisphosphoglycerate-independent phosphoglycerate mutase (513 aa).

Residues Asp-13 and Ser-63 each contribute to the Mn(2+) site. Ser-63 serves as the catalytic Phosphoserine intermediate. Residues His-124, 154–155 (RD), Arg-186, Arg-192, 262–265 (RADR), and Lys-335 each bind substrate. 5 residues coordinate Mn(2+): Asp-403, His-407, Asp-444, His-445, and His-463.

The protein belongs to the BPG-independent phosphoglycerate mutase family. As to quaternary structure, monomer. Mn(2+) serves as cofactor.

The catalysed reaction is (2R)-2-phosphoglycerate = (2R)-3-phosphoglycerate. It participates in carbohydrate degradation; glycolysis; pyruvate from D-glyceraldehyde 3-phosphate: step 3/5. In terms of biological role, catalyzes the interconversion of 2-phosphoglycerate and 3-phosphoglycerate. The polypeptide is 2,3-bisphosphoglycerate-independent phosphoglycerate mutase (Myxococcus xanthus (strain DK1622)).